The sequence spans 283 residues: Bifunctional protein FolD (283 aa).

NADP(+) is bound by residues 163–165 (GRS), Ser188, and Ile229.

This sequence belongs to the tetrahydrofolate dehydrogenase/cyclohydrolase family. In terms of assembly, homodimer.

The enzyme catalyses (6R)-5,10-methylene-5,6,7,8-tetrahydrofolate + NADP(+) = (6R)-5,10-methenyltetrahydrofolate + NADPH. The catalysed reaction is (6R)-5,10-methenyltetrahydrofolate + H2O = (6R)-10-formyltetrahydrofolate + H(+). The protein operates within one-carbon metabolism; tetrahydrofolate interconversion. Functionally, catalyzes the oxidation of 5,10-methylenetetrahydrofolate to 5,10-methenyltetrahydrofolate and then the hydrolysis of 5,10-methenyltetrahydrofolate to 10-formyltetrahydrofolate. This Latilactobacillus sakei subsp. sakei (strain 23K) (Lactobacillus sakei subsp. sakei) protein is Bifunctional protein FolD.